A 393-amino-acid polypeptide reads, in one-letter code: NAD(P)H-quinone oxidoreductase subunit H, chloroplastic (393 aa).

Belongs to the complex I 49 kDa subunit family. NDH is composed of at least 16 different subunits, 5 of which are encoded in the nucleus.

It is found in the plastid. The protein localises to the chloroplast thylakoid membrane. It catalyses the reaction a plastoquinone + NADH + (n+1) H(+)(in) = a plastoquinol + NAD(+) + n H(+)(out). The catalysed reaction is a plastoquinone + NADPH + (n+1) H(+)(in) = a plastoquinol + NADP(+) + n H(+)(out). NDH shuttles electrons from NAD(P)H:plastoquinone, via FMN and iron-sulfur (Fe-S) centers, to quinones in the photosynthetic chain and possibly in a chloroplast respiratory chain. The immediate electron acceptor for the enzyme in this species is believed to be plastoquinone. Couples the redox reaction to proton translocation, and thus conserves the redox energy in a proton gradient. This chain is NAD(P)H-quinone oxidoreductase subunit H, chloroplastic, found in Zea mays (Maize).